Here is a 449-residue protein sequence, read N- to C-terminus: Tripartite motif-containing protein 64B (449 aa).

Residues 15-56 (CCICVNYFIDPVTIDCGHSFCRPCLCLCSEEGRAPMRCPSCR) form an RING-type zinc finger. The segment at 87–128 (SSDNICVLHEETKELFCEADKRLLCGPCSESPEHMAHSHSPI) adopts a B box-type zinc-finger fold. Positions 92, 95, 114, and 120 each coordinate Zn(2+). The stretch at 189–225 (LDEEEQRHLQALEREAEELFQQLQDSQVRMTQHLERM) forms a coiled coil. The 182-residue stretch at 268–449 (ELTSWCITGV…LRPFFCFGCT (182 aa)) folds into the B30.2/SPRY domain.

It belongs to the TRIM/RBCC family.

This chain is Tripartite motif-containing protein 64B (TRIM64B), found in Homo sapiens (Human).